We begin with the raw amino-acid sequence, 131 residues long: Phosphoribosyl-AMP cyclohydrolase (131 aa).

Asp-80 is a Mg(2+) binding site. Cys-81 contributes to the Zn(2+) binding site. Mg(2+)-binding residues include Asp-82 and Asp-84. Residues Cys-98 and Cys-105 each contribute to the Zn(2+) site.

Belongs to the PRA-CH family. As to quaternary structure, homodimer. It depends on Mg(2+) as a cofactor. The cofactor is Zn(2+).

The protein localises to the cytoplasm. It carries out the reaction 1-(5-phospho-beta-D-ribosyl)-5'-AMP + H2O = 1-(5-phospho-beta-D-ribosyl)-5-[(5-phospho-beta-D-ribosylamino)methylideneamino]imidazole-4-carboxamide. It functions in the pathway amino-acid biosynthesis; L-histidine biosynthesis; L-histidine from 5-phospho-alpha-D-ribose 1-diphosphate: step 3/9. In terms of biological role, catalyzes the hydrolysis of the adenine ring of phosphoribosyl-AMP. The sequence is that of Phosphoribosyl-AMP cyclohydrolase from Azoarcus sp. (strain BH72).